Here is a 93-residue protein sequence, read N- to C-terminus: Protein IDA-LIKE 4 (93 aa).

Positions 1-35 (MYPTRPHYWRRRLSINRPQAFLLLILCLFFIHHCD) are cleaved as a signal peptide.

Expressed in mainly in buds. Lower levels in roots. Detected at the base of pedicel, in the floral and funicule abscission zones, in vascular tissues, in guard cells of young seedlings and in hydathodes.

It localises to the secreted. The protein resides in the extracellular space. In terms of biological role, may be involved in floral abscission. The polypeptide is Protein IDA-LIKE 4 (IDL4) (Arabidopsis thaliana (Mouse-ear cress)).